Consider the following 216-residue polypeptide: 3-isopropylmalate dehydratase small subunit (216 aa).

The protein belongs to the LeuD family. LeuD type 1 subfamily. Heterodimer of LeuC and LeuD.

The enzyme catalyses (2R,3S)-3-isopropylmalate = (2S)-2-isopropylmalate. It functions in the pathway amino-acid biosynthesis; L-leucine biosynthesis; L-leucine from 3-methyl-2-oxobutanoate: step 2/4. In terms of biological role, catalyzes the isomerization between 2-isopropylmalate and 3-isopropylmalate, via the formation of 2-isopropylmaleate. The polypeptide is 3-isopropylmalate dehydratase small subunit (Burkholderia thailandensis (strain ATCC 700388 / DSM 13276 / CCUG 48851 / CIP 106301 / E264)).